A 713-amino-acid chain; its full sequence is Ribosomal RNA large subunit methyltransferase K/L (713 aa).

The 112-residue stretch at 43–154 (LAYRITLWTR…NGVITIAMNF (112 aa)) folds into the THUMP domain.

The protein belongs to the methyltransferase superfamily. RlmKL family.

Its subcellular location is the cytoplasm. It carries out the reaction guanosine(2445) in 23S rRNA + S-adenosyl-L-methionine = N(2)-methylguanosine(2445) in 23S rRNA + S-adenosyl-L-homocysteine + H(+). It catalyses the reaction guanosine(2069) in 23S rRNA + S-adenosyl-L-methionine = N(2)-methylguanosine(2069) in 23S rRNA + S-adenosyl-L-homocysteine + H(+). Its function is as follows. Specifically methylates the guanine in position 2445 (m2G2445) and the guanine in position 2069 (m7G2069) of 23S rRNA. This is Ribosomal RNA large subunit methyltransferase K/L from Shewanella sp. (strain MR-4).